The sequence spans 192 residues: Natural cytotoxicity triggering receptor 3 (192 aa).

Positions 1–18 (MAKVLLIVFIMVYAGSCA) are cleaved as a signal peptide. The 108-residue stretch at 19–126 (IWVSQPPEIR…VGTGNGTRLV (108 aa)) folds into the Ig-like domain. At 19-147 (IWVSQPPEIR…AEPERAAYTS (129 aa)) the chain is on the extracellular side. Cys-39 and Cys-108 are disulfide-bonded. N-linked (GlcNAc...) asparagine glycans are attached at residues Asn-42 and Asn-121. The chain crosses the membrane as a helical span at residues 148-168 (LLLRAGVYALSFLSVATGSVI). The Cytoplasmic segment spans residues 169–192 (YYQGKCLCHVGNTATPPTASEERF).

It belongs to the natural cytotoxicity receptor (NCR) family. In terms of assembly, homodimer in the unliganted form. Interacts with CD3Z. Interacts with and is activated by binding to NCR3LG1. Interacts with and is activated by binding to BAG6. Interacts with and is inhibited by binding to LGALS3.

It is found in the cell membrane. In terms of biological role, cell membrane receptor of natural killer/NK cells that is activated by binding of extracellular ligands including BAG6 and NCR3LG1. Stimulates NK cells cytotoxicity toward neighboring cells producing these ligands. It controls, for instance, NK cells cytotoxicity against tumor cells. Engagement of NCR3 by BAG6 also promotes myeloid dendritic cells (DC) maturation, both through killing DCs that did not acquire a mature phenotype, and inducing the release by NK cells of TNFA and IFNG that promote DC maturation. In Rattus norvegicus (Rat), this protein is Natural cytotoxicity triggering receptor 3 (Ncr3).